Reading from the N-terminus, the 425-residue chain is Serine--tRNA ligase (425 aa).

233–235 provides a ligand contact to L-serine; it reads TAE. 264–266 contributes to the ATP binding site; the sequence is RRE. Residue glutamate 287 coordinates L-serine. 351–354 is a binding site for ATP; the sequence is EISS. Residue serine 385 coordinates L-serine.

The protein belongs to the class-II aminoacyl-tRNA synthetase family. Type-1 seryl-tRNA synthetase subfamily. Homodimer. The tRNA molecule binds across the dimer.

Its subcellular location is the cytoplasm. The enzyme catalyses tRNA(Ser) + L-serine + ATP = L-seryl-tRNA(Ser) + AMP + diphosphate + H(+). It carries out the reaction tRNA(Sec) + L-serine + ATP = L-seryl-tRNA(Sec) + AMP + diphosphate + H(+). It functions in the pathway aminoacyl-tRNA biosynthesis; selenocysteinyl-tRNA(Sec) biosynthesis; L-seryl-tRNA(Sec) from L-serine and tRNA(Sec): step 1/1. Its function is as follows. Catalyzes the attachment of serine to tRNA(Ser). Is also able to aminoacylate tRNA(Sec) with serine, to form the misacylated tRNA L-seryl-tRNA(Sec), which will be further converted into selenocysteinyl-tRNA(Sec). The sequence is that of Serine--tRNA ligase from Parasynechococcus marenigrum (strain WH8102).